Here is an 88-residue protein sequence, read N- to C-terminus: Probable glutaredoxin ssr2061 (88 aa).

An intrachain disulfide couples C15 to C18.

This sequence belongs to the glutaredoxin family.

Its function is as follows. Has a glutathione-disulfide oxidoreductase activity in the presence of NADPH and glutathione reductase. Reduces low molecular weight disulfides and proteins. This chain is Probable glutaredoxin ssr2061, found in Synechocystis sp. (strain ATCC 27184 / PCC 6803 / Kazusa).